A 434-amino-acid polypeptide reads, in one-letter code: Tyrosine-protein phosphatase non-receptor type 1 (434 aa).

Residues 3–277 (IEKEFHRLDQ…RFSYLAVIEG (275 aa)) form the Tyrosine-protein phosphatase domain. Ser-50 is modified (phosphoserine). Substrate is bound by residues Asp-181, 215–221 (CSAGIGR), and Gln-262. Cys-215 functions as the Phosphocysteine intermediate in the catalytic mechanism. A disordered region spans residues 291–319 (WKELSNEDLDPPPEHTPPPPRPPKRTSEM).

It belongs to the protein-tyrosine phosphatase family. Non-receptor class 1 subfamily. In terms of assembly, interacts with EPHA3 (phosphorylated); dephosphorylates EPHA3 and may regulate its trafficking and function. Interacts with MET. Interacts with NCK1. Phosphorylated on serine and threonine residues near the N-terminus by casein kinase II (CK2).

Its subcellular location is the endoplasmic reticulum membrane. It catalyses the reaction O-phospho-L-tyrosyl-[protein] + H2O = L-tyrosyl-[protein] + phosphate. Functionally, may play an important role in CKII- and p60c-src-induced signal transduction cascades. May regulate the EFNA5-EPHA3 signaling pathway which modulates cell reorganization and cell-cell repulsion. May also regulate the hepatocyte growth factor receptor signaling pathway through dephosphorylation of MET. The sequence is that of Tyrosine-protein phosphatase non-receptor type 1 (PTPN1) from Gallus gallus (Chicken).